Here is a 341-residue protein sequence, read N- to C-terminus: UPF0284 protein Ta0078 (341 aa).

It belongs to the UPF0284 family.

This chain is UPF0284 protein Ta0078, found in Thermoplasma acidophilum (strain ATCC 25905 / DSM 1728 / JCM 9062 / NBRC 15155 / AMRC-C165).